Reading from the N-terminus, the 189-residue chain is Large ribosomal subunit protein uL5 (189 aa).

The protein belongs to the universal ribosomal protein uL5 family. Part of the 50S ribosomal subunit; part of the 5S rRNA/L5/L18/L25 subcomplex. Contacts the 5S rRNA and the P site tRNA. Forms a bridge to the 30S subunit in the 70S ribosome.

Functionally, this is one of the proteins that bind and probably mediate the attachment of the 5S RNA into the large ribosomal subunit, where it forms part of the central protuberance. In the 70S ribosome it contacts protein S13 of the 30S subunit (bridge B1b), connecting the 2 subunits; this bridge is implicated in subunit movement. Contacts the P site tRNA; the 5S rRNA and some of its associated proteins might help stabilize positioning of ribosome-bound tRNAs. The protein is Large ribosomal subunit protein uL5 of Corynebacterium jeikeium (strain K411).